Here is a 450-residue protein sequence, read N- to C-terminus: L-galactonate dehydratase (450 aa).

Lys221 is an active-site residue. Positions 251, 277, and 306 each coordinate Mg(2+). Residue His356 is part of the active site.

Belongs to the mandelate racemase/muconate lactonizing enzyme family. Mg(2+) serves as cofactor.

The enzyme catalyses L-galactonate = 2-dehydro-3-deoxy-L-galactonate + H2O. It participates in carbohydrate acid metabolism. Mediates the conversion of L-galactonate to 2-dehydro-3-deoxy-L-galactonate, the second step in D-galacturonate catabolic process. The polypeptide is L-galactonate dehydratase (lgd1) (Hypocrea jecorina (Trichoderma reesei)).